A 515-amino-acid chain; its full sequence is Maturase K (515 aa).

It belongs to the intron maturase 2 family. MatK subfamily.

The protein resides in the plastid. Its subcellular location is the chloroplast. Functionally, usually encoded in the trnK tRNA gene intron. Probably assists in splicing its own and other chloroplast group II introns. The chain is Maturase K from Trillium luteum (Yellow wakerobin).